Reading from the N-terminus, the 804-residue chain is Ral guanine nucleotide dissociation stimulator-like 1 (804 aa).

In terms of domain architecture, N-terminal Ras-GEF spans 101 to 231 (KIRSIRAGTL…RAQSLLEQLR (131 aa)). Residues 270–539 (EVDLVAEQLT…YVLSCEVEGL (270 aa)) enclose the Ras-GEF domain. Disordered regions lie at residues 564-611 (NDST…TPTH) and 640-676 (SASI…GFPP). 2 stretches are compositionally biased toward low complexity: residues 581-607 (PTGS…SDGM) and 640-649 (SASISLASPT). Residues 661 to 671 (ISLTPLMSPTS) show a composition bias toward polar residues. A Ras-associating domain is found at 684–771 (DACIIRVSLE…FDFLLRLRGS (88 aa)).

In terms of biological role, probable guanine nucleotide exchange factor. The protein is Ral guanine nucleotide dissociation stimulator-like 1 (rgl1) of Danio rerio (Zebrafish).